The primary structure comprises 240 residues: Extracellular superoxide dismutase [Cu-Zn] (240 aa).

An N-terminal signal peptide occupies residues 1 to 18 (MLALLCSCLLLAAGASDA). Intrachain disulfides connect cysteine 63-cysteine 208 and cysteine 125-cysteine 207. An N-linked (GlcNAc...) asparagine glycan is attached at asparagine 107. Cu cation contacts are provided by histidine 114, histidine 116, and histidine 131. Zn(2+) is bound by residues histidine 131, histidine 139, histidine 142, and aspartate 145. Histidine 181 serves as a coordination point for Cu cation. Lysine 229 and lysine 230 each carry an N-linked (Glc) (glycation) lysine; in vitro glycan.

The protein belongs to the Cu-Zn superoxide dismutase family. As to quaternary structure, homotetramer. Directly interacts with ATP7A; this interaction is copper-dependent and is required for SOD3 activity. Cu cation serves as cofactor. It depends on Zn(2+) as a cofactor. In terms of tissue distribution, expressed in blood vessels, heart, lung, kidney and placenta. Major SOD isoenzyme in extracellular fluids such as plasma, lymph and synovial fluid.

The protein resides in the secreted. The protein localises to the extracellular space. It localises to the golgi apparatus. Its subcellular location is the trans-Golgi network. It carries out the reaction 2 superoxide + 2 H(+) = H2O2 + O2. In terms of biological role, protect the extracellular space from toxic effect of reactive oxygen intermediates by converting superoxide radicals into hydrogen peroxide and oxygen. This is Extracellular superoxide dismutase [Cu-Zn] (SOD3) from Homo sapiens (Human).